We begin with the raw amino-acid sequence, 360 residues long: Arginase, non-hepatic 3 (360 aa).

H122, D145, H147, and D149 together coordinate Mn(2+). Residues 147 to 151 (HADIN), 158 to 160 (SGN), and D204 contribute to the substrate site. Mn(2+) is bound by residues D253 and D255. Substrate contacts are provided by T267 and E298.

The protein belongs to the arginase family. In terms of assembly, homotrimer. Mn(2+) is required as a cofactor. In terms of tissue distribution, expressed at differing tadpole stages in tail, intestine, hindlimb and trunk region. Strongest in tadpole tail.

It carries out the reaction L-arginine + H2O = urea + L-ornithine. It participates in nitrogen metabolism; urea cycle; L-ornithine and urea from L-arginine: step 1/1. As well as its role in the urea cycle, may be involved in tissue remodeling. The protein is Arginase, non-hepatic 3 (arg2-c) of Xenopus laevis (African clawed frog).